Here is a 372-residue protein sequence, read N- to C-terminus: GDP-mannose 4,6 dehydratase (372 aa).

The segment at 1 to 20 (MAHAPARCPSARGSGDGEMG) is disordered. N-acetylalanine is present on Ala-2. Residues 30–35 (GITGQD), 55–58 (RRSS), 86–87 (DL), 108–112 (LGAQS), and Tyr-123 contribute to the NADP(+) site. Thr-155 is a catalytic residue. Active-site nucleophile residues include Glu-157 and Tyr-179. 3 residues coordinate NADP(+): Lys-183, His-209, and Arg-214. Tyr-323 is subject to Phosphotyrosine.

It belongs to the NAD(P)-dependent epimerase/dehydratase family. GDP-mannose 4,6-dehydratase subfamily. NADP(+) serves as cofactor. Highly expressed in pancreas and small intestine. Expressed in thymus, protstate, colon, heart, placenta, liver and kidney. Expressed at low levels in spleen, testis, brain and lung.

The catalysed reaction is GDP-alpha-D-mannose = GDP-4-dehydro-alpha-D-rhamnose + H2O. Its pathway is nucleotide-sugar biosynthesis; GDP-L-fucose biosynthesis via de novo pathway; GDP-L-fucose from GDP-alpha-D-mannose: step 1/2. Inhibited by GDP-fucose. In terms of biological role, catalyzes the conversion of GDP-D-mannose to GDP-4-dehydro-6-deoxy-D-mannose. The sequence is that of GDP-mannose 4,6 dehydratase from Homo sapiens (Human).